Reading from the N-terminus, the 502-residue chain is Probable cytosol aminopeptidase (502 aa).

2 residues coordinate Mn(2+): lysine 269 and aspartate 274. Lysine 281 is an active-site residue. Mn(2+)-binding residues include aspartate 292, aspartate 351, and glutamate 353. Arginine 355 is a catalytic residue.

The protein belongs to the peptidase M17 family. Mn(2+) is required as a cofactor.

It localises to the cytoplasm. The catalysed reaction is Release of an N-terminal amino acid, Xaa-|-Yaa-, in which Xaa is preferably Leu, but may be other amino acids including Pro although not Arg or Lys, and Yaa may be Pro. Amino acid amides and methyl esters are also readily hydrolyzed, but rates on arylamides are exceedingly low.. It catalyses the reaction Release of an N-terminal amino acid, preferentially leucine, but not glutamic or aspartic acids.. Functionally, presumably involved in the processing and regular turnover of intracellular proteins. Catalyzes the removal of unsubstituted N-terminal amino acids from various peptides. The polypeptide is Probable cytosol aminopeptidase (Shewanella denitrificans (strain OS217 / ATCC BAA-1090 / DSM 15013)).